We begin with the raw amino-acid sequence, 1192 residues long: Protein FAM83H (1192 aa).

Disordered stretches follow at residues 435–542, 557–661, 695–720, 737–1082, and 1094–1145; these read EGMG…VKQG, DGGE…LAEP, SKLEQHNSSQAKSGGELQEEKEESEP, LSRE…SNII, and ILEQ…ERDN. Positions 437–447 are enriched in basic and acidic residues; the sequence is MGHDDRGHYDR. 2 stretches are compositionally biased toward polar residues: residues 523-538 and 629-652; these read QLFSTGDQVRQSQDPS and SDLGPTSTDTLKPAISASSLASST. Basic and acidic residues-rich tracts occupy residues 737-759 and 768-789; these read LSREPFDWNKHKKADEKDVKHAS and DTKEEPIKEKEKPDNPKPEENK. A compositionally biased stretch (polar residues) spans 790–810; sequence VTQPTVPSASQQITSSLNMND. Residues 820-834 show a composition bias toward basic and acidic residues; the sequence is DQQEKRKTSKLELDL. Residues 861–878 show a composition bias toward polar residues; sequence TSEQSTVKAQEPTVSQTD. Basic and acidic residues-rich tracts occupy residues 880–892 and 914–925; these read VPHRPVIETKPKP and APKKEPVKEPTK. Residues 926–946 show a composition bias toward low complexity; the sequence is SLKPFPSPKFLKPFKSSQSSS. The span at 994-1005 shows a compositional bias: basic and acidic residues; the sequence is ESKDTKALDFLK. The span at 1068–1082 shows a compositional bias: polar residues; the sequence is KPTTSRYQSSTSNII. Residues 1107–1122 show a composition bias toward basic and acidic residues; sequence QQNEESGKGDGGKDDV.

Belongs to the FAM83 family.

Its subcellular location is the cytoplasm. It localises to the cytoskeleton. Functionally, may play a role in keratin cytoskeleton disassembly. The polypeptide is Protein FAM83H (Danio rerio (Zebrafish)).